Here is a 217-residue protein sequence, read N- to C-terminus: Adenylate kinase (217 aa).

11–16 (GSGKGT) lines the ATP pocket. The NMP stretch occupies residues 31-61 (STGTMLRQALTRSTHKSYELHKNIMHTGDLV). AMP contacts are provided by residues T32, R37, 59–61 (DLV), 87–90 (GFPR), and Q94. The interval 124–161 (GRRIHVGSGRTYHIKFNPPRNYGLDDITGEILTTRKDD) is LID. ATP contacts are provided by residues R125 and 134–135 (TY). Residues R158 and R169 each contribute to the AMP site. R202 contributes to the ATP binding site.

The protein belongs to the adenylate kinase family. As to quaternary structure, monomer.

Its subcellular location is the cytoplasm. It catalyses the reaction AMP + ATP = 2 ADP. Its pathway is purine metabolism; AMP biosynthesis via salvage pathway; AMP from ADP: step 1/1. Catalyzes the reversible transfer of the terminal phosphate group between ATP and AMP. Plays an important role in cellular energy homeostasis and in adenine nucleotide metabolism. This Blochmanniella pennsylvanica (strain BPEN) protein is Adenylate kinase.